The chain runs to 139 residues: Large ribosomal subunit protein bL17 (139 aa).

Belongs to the bacterial ribosomal protein bL17 family. In terms of assembly, part of the 50S ribosomal subunit. Contacts protein L32.

The polypeptide is Large ribosomal subunit protein bL17 (Afipia carboxidovorans (strain ATCC 49405 / DSM 1227 / KCTC 32145 / OM5) (Oligotropha carboxidovorans)).